A 202-amino-acid polypeptide reads, in one-letter code: ATP-dependent Clp protease proteolytic subunit (202 aa).

Serine 106 functions as the Nucleophile in the catalytic mechanism. The active site involves histidine 131.

This sequence belongs to the peptidase S14 family. Fourteen ClpP subunits assemble into 2 heptameric rings which stack back to back to give a disk-like structure with a central cavity, resembling the structure of eukaryotic proteasomes.

The protein resides in the cytoplasm. It carries out the reaction Hydrolysis of proteins to small peptides in the presence of ATP and magnesium. alpha-casein is the usual test substrate. In the absence of ATP, only oligopeptides shorter than five residues are hydrolyzed (such as succinyl-Leu-Tyr-|-NHMec, and Leu-Tyr-Leu-|-Tyr-Trp, in which cleavage of the -Tyr-|-Leu- and -Tyr-|-Trp bonds also occurs).. In terms of biological role, cleaves peptides in various proteins in a process that requires ATP hydrolysis. Has a chymotrypsin-like activity. Plays a major role in the degradation of misfolded proteins. In Paracidovorax citrulli (strain AAC00-1) (Acidovorax citrulli), this protein is ATP-dependent Clp protease proteolytic subunit.